Consider the following 163-residue polypeptide: Cyanate hydratase (163 aa).

Residues R103, E106, and S129 contribute to the active site.

Belongs to the cyanase family.

It carries out the reaction cyanate + hydrogencarbonate + 3 H(+) = NH4(+) + 2 CO2. Functionally, catalyzes the reaction of cyanate with bicarbonate to produce ammonia and carbon dioxide. The polypeptide is Cyanate hydratase (Ajellomyces capsulatus (strain H143) (Darling's disease fungus)).